A 204-amino-acid polypeptide reads, in one-letter code: Tat proofreading chaperone DmsD (204 aa).

This sequence belongs to the TorD/DmsD family. DmsD subfamily.

Functionally, required for biogenesis/assembly of DMSO reductase, but not for the interaction of the DmsA signal peptide with the Tat system. May be part of a chaperone cascade complex that facilitates a folding-maturation pathway for the substrate protein. The sequence is that of Tat proofreading chaperone DmsD from Salmonella typhi.